The following is a 344-amino-acid chain: Ferrochelatase (344 aa).

Fe cation-binding residues include His214 and Glu295.

The protein belongs to the ferrochelatase family.

The protein localises to the cytoplasm. The enzyme catalyses heme b + 2 H(+) = protoporphyrin IX + Fe(2+). It functions in the pathway porphyrin-containing compound metabolism; protoheme biosynthesis; protoheme from protoporphyrin-IX: step 1/1. In terms of biological role, catalyzes the ferrous insertion into protoporphyrin IX. This chain is Ferrochelatase, found in Rhizobium leguminosarum bv. trifolii (strain WSM2304).